The primary structure comprises 384 residues: Probable beta-1,3-galactosyltransferase 1 (384 aa).

Residues 21–43 (SVFFMCLASFCLGMFFTNRMWNI) form a helical; Signal-anchor for type II membrane protein membrane-spanning segment. 2 N-linked (GlcNAc...) asparagine glycosylation sites follow: N73 and N105.

It belongs to the glycosyltransferase 31 family. Mn(2+) serves as cofactor.

The protein resides in the golgi apparatus membrane. It functions in the pathway protein modification; protein glycosylation. Beta-1,3-galactosyltransferase that transfers galactose from UDP-galactose to substrates with a terminal glycosyl residue. The sequence is that of Probable beta-1,3-galactosyltransferase 1 (B3GALT1) from Arabidopsis thaliana (Mouse-ear cress).